The sequence spans 781 residues: LPS-assembly protein LptD (781 aa).

A signal peptide spans 1–24 (MKKNYYTVLSLSILTALYSTSSQA).

It belongs to the LptD family. As to quaternary structure, component of the lipopolysaccharide transport and assembly complex. Interacts with LptE and LptA.

The protein localises to the cell outer membrane. In terms of biological role, together with LptE, is involved in the assembly of lipopolysaccharide (LPS) at the surface of the outer membrane. The sequence is that of LPS-assembly protein LptD from Histophilus somni (strain 129Pt) (Haemophilus somnus).